The chain runs to 178 residues: Translation initiation factor IF-3 (178 aa).

The interval M1–D20 is disordered.

It belongs to the IF-3 family. In terms of assembly, monomer.

Its subcellular location is the cytoplasm. IF-3 binds to the 30S ribosomal subunit and shifts the equilibrium between 70S ribosomes and their 50S and 30S subunits in favor of the free subunits, thus enhancing the availability of 30S subunits on which protein synthesis initiation begins. The sequence is that of Translation initiation factor IF-3 from Brucella anthropi (strain ATCC 49188 / DSM 6882 / CCUG 24695 / JCM 21032 / LMG 3331 / NBRC 15819 / NCTC 12168 / Alc 37) (Ochrobactrum anthropi).